A 280-amino-acid chain; its full sequence is Dihydropteroate synthase (280 aa).

Positions 1 to 265 constitute a Pterin-binding domain; that stretch reads MSPAPVQVMG…DVRASVDAIK (265 aa). Mg(2+) is bound at residue N13. (7,8-dihydropterin-6-yl)methyl diphosphate contacts are provided by residues D86, N105, D177, K213, and 253–255; that span reads RVH.

It belongs to the DHPS family. In terms of assembly, homodimer. The cofactor is Mg(2+).

The catalysed reaction is (7,8-dihydropterin-6-yl)methyl diphosphate + 4-aminobenzoate = 7,8-dihydropteroate + diphosphate. Its pathway is cofactor biosynthesis; tetrahydrofolate biosynthesis; 7,8-dihydrofolate from 2-amino-4-hydroxy-6-hydroxymethyl-7,8-dihydropteridine diphosphate and 4-aminobenzoate: step 1/2. In terms of biological role, catalyzes the condensation of para-aminobenzoate (pABA) with 6-hydroxymethyl-7,8-dihydropterin diphosphate (DHPt-PP) to form 7,8-dihydropteroate (H2Pte), the immediate precursor of folate derivatives. This is Dihydropteroate synthase (folP1) from Mycobacterium bovis (strain ATCC BAA-935 / AF2122/97).